Reading from the N-terminus, the 314-residue chain is DNA-directed RNA polymerase subunit alpha (314 aa).

An alpha N-terminal domain (alpha-NTD) region spans residues 1–228; it reads MAQYTIECVE…DQLRPLQEIT (228 aa). An alpha C-terminal domain (alpha-CTD) region spans residues 241–314; sequence NTVGQVPIEE…SLPKDKPARS (74 aa).

It belongs to the RNA polymerase alpha chain family. In terms of assembly, in cyanobacteria the RNAP catalytic core is composed of 2 alpha, 1 beta, 1 beta', 1 gamma and 1 omega subunit. When a sigma factor is associated with the core the holoenzyme is formed, which can initiate transcription.

It catalyses the reaction RNA(n) + a ribonucleoside 5'-triphosphate = RNA(n+1) + diphosphate. Its function is as follows. DNA-dependent RNA polymerase catalyzes the transcription of DNA into RNA using the four ribonucleoside triphosphates as substrates. The sequence is that of DNA-directed RNA polymerase subunit alpha from Gloeobacter violaceus (strain ATCC 29082 / PCC 7421).